The primary structure comprises 517 residues: 2,3-bisphosphoglycerate-independent phosphoglycerate mutase (517 aa).

The Mn(2+) site is built by Asp14 and Ser64. The active-site Phosphoserine intermediate is Ser64. Substrate is bound by residues His125, 155-156 (RD), Arg187, Arg193, 259-262 (RPDR), and Lys334. Mn(2+)-binding residues include Asp401, His405, Asp442, His443, and His461.

It belongs to the BPG-independent phosphoglycerate mutase family. Monomer. Requires Mn(2+) as cofactor.

It catalyses the reaction (2R)-2-phosphoglycerate = (2R)-3-phosphoglycerate. The protein operates within carbohydrate degradation; glycolysis; pyruvate from D-glyceraldehyde 3-phosphate: step 3/5. Functionally, catalyzes the interconversion of 2-phosphoglycerate and 3-phosphoglycerate. This chain is 2,3-bisphosphoglycerate-independent phosphoglycerate mutase, found in Symbiobacterium thermophilum (strain DSM 24528 / JCM 14929 / IAM 14863 / T).